The sequence spans 124 residues: Large ribosomal subunit protein bL21 (124 aa).

This sequence belongs to the bacterial ribosomal protein bL21 family. In terms of assembly, part of the 50S ribosomal subunit. Contacts protein L20.

Functionally, this protein binds to 23S rRNA in the presence of protein L20. The polypeptide is Large ribosomal subunit protein bL21 (Synechococcus sp. (strain WH7803)).